Here is a 149-residue protein sequence, read N- to C-terminus: MEVILLEKIGKIGNLGEVVKVRSGYGRNFLIPQGKALPATSENKSVFEAQRADYEARQAEILADAETLAAKVDEVSVVMKRPAGAMDKLFGSVTSADIAVFYKDLGLNIPRNIIDVLTPIRTLGEHQVRVRLHPDVVRVISIQVERAVK.

Belongs to the bacterial ribosomal protein bL9 family.

In terms of biological role, binds to the 23S rRNA. The protein is Large ribosomal subunit protein bL9 of Magnetococcus marinus (strain ATCC BAA-1437 / JCM 17883 / MC-1).